The primary structure comprises 120 residues: Aspartate 1-decarboxylase (120 aa).

The Schiff-base intermediate with substrate; via pyruvic acid role is filled by Ser24. Ser24 is modified (pyruvic acid (Ser)). Position 56 (Thr56) interacts with substrate. Catalysis depends on Tyr57, which acts as the Proton donor. 70 to 72 (GAA) contacts substrate.

Belongs to the PanD family. In terms of assembly, heterooctamer of four alpha and four beta subunits. Pyruvate serves as cofactor. In terms of processing, is synthesized initially as an inactive proenzyme, which is activated by self-cleavage at a specific serine bond to produce a beta-subunit with a hydroxyl group at its C-terminus and an alpha-subunit with a pyruvoyl group at its N-terminus.

It is found in the cytoplasm. It catalyses the reaction L-aspartate + H(+) = beta-alanine + CO2. Its pathway is cofactor biosynthesis; (R)-pantothenate biosynthesis; beta-alanine from L-aspartate: step 1/1. Catalyzes the pyruvoyl-dependent decarboxylation of aspartate to produce beta-alanine. The protein is Aspartate 1-decarboxylase of Pyrobaculum islandicum (strain DSM 4184 / JCM 9189 / GEO3).